Consider the following 177-residue polypeptide: Large ribosomal subunit protein uL6 (177 aa).

The protein belongs to the universal ribosomal protein uL6 family. Part of the 50S ribosomal subunit.

Its function is as follows. This protein binds to the 23S rRNA, and is important in its secondary structure. It is located near the subunit interface in the base of the L7/L12 stalk, and near the tRNA binding site of the peptidyltransferase center. The sequence is that of Large ribosomal subunit protein uL6 from Salmonella newport (strain SL254).